The primary structure comprises 20 residues: Short cationic peptide-4b (20 aa).

Glutamic acid 1-amide is present on glutamate 20.

Expressed by the venom gland.

The protein resides in the secreted. The protein is Short cationic peptide-4b of Cupiennius salei (American wandering spider).